The primary structure comprises 2515 residues: Protein tudor (2515 aa).

Phosphoserine occurs at positions 226, 235, and 239. Tudor domains follow at residues Ala-455–Ile-513 and Gln-641–Met-696. Ser-800 is subject to Phosphoserine. Residues Gln-840 to Lys-996 form a disordered region. Residues Ser-890–Ser-900 show a composition bias toward low complexity. Over residues Arg-906–Pro-917 the composition is skewed to polar residues. Basic and acidic residues predominate over residues Arg-918–Lys-927. Composition is skewed to polar residues over residues Gly-943–Pro-954 and Gln-964–Arg-976. Residues Ser-977–Ala-995 show a composition bias toward low complexity. 2 Tudor domains span residues Gln-1062–Pro-1122 and Lys-1355–His-1414. The interval Glu-1515 to Val-1589 is disordered. Positions Asn-1540 to Glu-1553 are enriched in basic and acidic residues. The segment covering Ser-1569–Pro-1584 has biased composition (pro residues). Tudor domains lie at Asn-1662–Glu-1718, Gly-1839–Ser-1898, Lys-2023–Pro-2082, Thr-2211–Ser-2269, and Asp-2392–Arg-2451.

May form part of a piRNA processing complex consisting of tud, aub and AGO3. Interacts with AGO3 (when symmetrically dimethylated on Arg residues) and aub (when symmetrically dimethylated on Arg residues). Interacts with vls. Interacts with me31B/DDX6 (when symmetrically dimethylated on Arg residues).

Its subcellular location is the cytoplasm. It localises to the perinuclear region. It is found in the cytoplasmic ribonucleoprotein granule. Its function is as follows. May act via the Piwi-interacting RNA (piRNA) metabolic process mediated by aub and AGO3 Piwi proteins, which mediates the repression of transposable elements during meiosis by forming complexes composed of piRNAs and Piwi proteins and governs the methylation and subsequent repression of transposons. Required during oogenesis for the formation of primordial germ cells and for normal abdominal segmentation. Not involved in repression of retroelements. The protein is Protein tudor of Drosophila melanogaster (Fruit fly).